The primary structure comprises 1331 residues: Xanthine dehydrogenase/oxidase (1331 aa).

A 2Fe-2S ferredoxin-type domain is found at 4–91 (DELVFFVNGK…HVAVTTVEGI (88 aa)). Residues C43, C48, C51, C73, C112, C115, C147, and C149 each contribute to the [2Fe-2S] cluster site. In terms of domain architecture, FAD-binding PCMH-type spans 228 to 413 (FEGERVTWIQ…LSIEIPYSKE (186 aa)). FAD is bound by residues 256–263 (LVVGNTEI), F336, 346–350 (SIGGN), D359, L403, and K421. Cysteines 535 and 992 form a disulfide. Q767 and F798 together coordinate Mo-molybdopterin. Substrate-binding residues include E802 and R880. R912 provides a ligand contact to Mo-molybdopterin. Residues F914 and T1010 each coordinate substrate. A1079 contributes to the Mo-molybdopterin binding site. Residue E1261 is the Proton acceptor of the active site.

Belongs to the xanthine dehydrogenase family. Homodimer. Interacts with BTN1A1. It depends on [2Fe-2S] cluster as a cofactor. FAD serves as cofactor. The cofactor is Mo-molybdopterin. Post-translationally, subject to partial proteolysis; this alters the enzyme from the dehydrogenase form (D) to the oxidase form (O). Contains sulfhydryl groups that are easily oxidized (in vitro); this alters the enzyme from the dehydrogenase form (D) to the oxidase form (O).

The protein localises to the peroxisome. It is found in the cytoplasm. The protein resides in the secreted. It catalyses the reaction xanthine + NAD(+) + H2O = urate + NADH + H(+). The catalysed reaction is hypoxanthine + NAD(+) + H2O = xanthine + NADH + H(+). It carries out the reaction xanthine + O2 + H2O = urate + H2O2. With respect to regulation, can be converted from the dehydrogenase form (D) to the oxidase form (O) irreversibly by proteolysis or reversibly through the oxidation of sulfhydryl groups. In terms of biological role, key enzyme in purine degradation. Catalyzes the oxidation of hypoxanthine to xanthine. Catalyzes the oxidation of xanthine to uric acid. Contributes to the generation of reactive oxygen species. The polypeptide is Xanthine dehydrogenase/oxidase (Xdh) (Rattus norvegicus (Rat)).